The chain runs to 759 residues: Solute carrier family 26 member 6 (759 aa).

The Cytoplasmic portion of the chain corresponds to 1–115 (MGLADASGPR…PQGLAYALLA (115 aa)). Residues 116–136 (GLPPVFGLYSSFYPVFIYFLF) form a helical membrane-spanning segment. Over 137-186 (GTSRHISVGTFAVMSVMVGSVTESLAPQALNDSMINETARDAARVQVAST) the chain is Extracellular. N-linked (GlcNAc) asparagine glycans are attached at residues N167 and N172. A helical transmembrane segment spans residues 187–207 (LSVLVGLFQVGLGLIHFGFVV). Residues 208-263 (TYLSEPLVRGYTTAAAVQVFVSQLKYVFGLHLSSHSGPLSLIYTVLEVCWKLPQSK) lie on the Cytoplasmic side of the membrane. A helical membrane pass occupies residues 264-284 (VGTVVTAAVAGVVLVVVKLLN). The Extracellular portion of the chain corresponds to 285 to 293 (DKLQQQLPM). The helical transmembrane segment at 294–314 (PIPGELLTLIGATGISYGMGL) threads the bilayer. The Cytoplasmic segment spans residues 315 to 347 (KHRFEVDVVGNIPAGLVPPVAPNTQLFSKLVGS). A helical transmembrane segment spans residues 348 to 368 (AFTIAVVGFAIAISLGKIFAL). Residues 369–379 (RHGYRVDSNQE) are Extracellular-facing. The chain crosses the membrane as a helical span at residues 380–400 (LVALGLSNLIGGIFQCFPVSC). Over 401-416 (SMSRSLVQESTGGNSQ) the chain is Cytoplasmic. Residues 417–437 (VAGAISSLFILLIIVKLGELF) form a helical membrane-spanning segment. Topologically, residues 438-484 (HDLPKAVLAAIIIVNLKGMLRQLSDMRSLWKANRADLLIWLVTFTAT) are extracellular. A helical membrane pass occupies residues 485 to 505 (ILLNLDLGLVVAVIFSLLLVV). Residues 506 to 759 (VRTQMPHYSV…PDSPVSVTRL (254 aa)) are Cytoplasmic-facing. Positions 530–742 (EYSEAKEVRG…ASVHDAVTFA (213 aa)) constitute an STAS domain. N553 and K582 each carry phosphoserine; by PKC. S616 is subject to Phosphoserine. The interval 636–657 (GDKMEDATANGQEDSKAPDGST) is disordered. Phosphoserine is present on residues S752 and S755.

It belongs to the SLC26A/SulP transporter (TC 2.A.53) family. Interacts (via C-terminal domain) with PDZK1 (via C-terminal PDZ domain); the interaction induces chloride and oxalate exchange transport. Interacts with CFTR and SLC26A3. Interacts with AHCYL1; the interaction increases SLC26A6 activity. As to quaternary structure, interacts with NHERF1 (via the PDZ domains) and NHERF2 (via the PDZ domains). Interacts (via C-terminal cytoplasmic domain) with CA2; the interaction stimulates chloride-bicarbonate exchange activity. In terms of assembly, interacts with NHERF1 (via the PDZ domains) and NHERF2 (via the PDZ domains). Phosphorylated on serine residues by PKC; the phosphorylation disrupts interaction with carbonic anhydrase CA2 and reduces bicarbonate transport activity in a phorbol myristate acetate (PMA)-induced manner. In terms of processing, glycosylation at Asn-167 and Asn-172 positively regulates its chloride oxalate exchanger activity. As to expression, ubiquitous. Highest levels in kidney and pancreas. Lower expression in heart, skeletal muscle, liver and placenta. Also found in lung and brain. In terms of tissue distribution, ubiquitously expressed. Highest levels expressed in the kidney and pancreas. Expressed weakly in placenta, lung, liver and pancreas. As to expression, expressed in heart, brain, placenta, lung, liver, kidney, pancreas, spleen, thymus, prostate, testis and ovary.

The protein localises to the cell membrane. It localises to the apical cell membrane. The protein resides in the cytoplasmic vesicle membrane. It is found in the microsome. Its subcellular location is the basolateral cell membrane. The catalysed reaction is 2 hydrogencarbonate(in) + chloride(out) = 2 hydrogencarbonate(out) + chloride(in). It carries out the reaction oxalate(in) + chloride(out) = oxalate(out) + chloride(in). It catalyses the reaction oxalate(in) + formate(out) = oxalate(out) + formate(in). The enzyme catalyses oxalate(in) + sulfate(out) = oxalate(out) + sulfate(in). The catalysed reaction is 2 hydrogencarbonate(out) + sulfate(in) = 2 hydrogencarbonate(in) + sulfate(out). With respect to regulation, oxalate transport activity is inhibited by 4,4'-diisothiocyanatostilbene-2,2'-disulfonic acid (DIDS). Its activity is regulated as follows. Chloride, bicarbonate and sulfate transport activities are inhibited by 4,4'-diisothiocyanatostilbene-2,2'-disulfonic acid (DIDS). Functionally, apical membrane anion-exchanger with wide epithelial distribution that plays a role as a component of the pH buffering system for maintaining acid-base homeostasis. Acts as a versatile DIDS-sensitive inorganic and organic anion transporter that mediates the uptake of monovalent anions like chloride, bicarbonate, formate and hydroxyl ion and divalent anions like sulfate and oxalate. Functions in multiple exchange modes involving pairs of these anions, which include chloride-bicarbonate, chloride-oxalate, oxalate-formate, oxalate-sulfate and chloride-formate exchange. Apical membrane chloride-bicarbonate exchanger that mediates luminal chloride absorption and bicarbonate secretion by the small intestinal brush border membrane and contributes to intracellular pH regulation in the duodenal upper villous epithelium during proton-coupled peptide absorption, possibly by providing a bicarbonate import pathway. Also mediates intestinal chloride absorption and oxalate secretion, thereby preventing hyperoxaluria and calcium oxalate urolithiasis. Transepithelial oxalate secretion, chloride-formate, chloride-oxalate and chloride-bicarbonate transport activities in the duodenum are inhibited by PKC activation in a calcium-independent manner. The apical membrane chloride-bicarbonate exchanger also provides a major route for fluid and bicarbonate secretion into the proximal tubules of the kidney as well as into the proximal part of the interlobular pancreatic ductal tree, where it mediates electrogenic chloride-bicarbonate exchange with a chloride-bicarbonate stoichiometry of 1:2, and hence will dilute and alkalinize protein-rich acinar secretion. Also mediates the transcellular sulfate absorption and oxalate secretion across the apical membrane in the duodenum and the formate ion efflux at the apical brush border of cells in the proximal tubules of kidney. Plays a role in sperm capacitation by increasing intracellular pH. In terms of biological role, apical membrane chloride-bicarbonate exchanger. Its association with carbonic anhydrase CA2 forms a bicarbonate transport metabolon; hence maximizes the local concentration of bicarbonate at the transporter site. This is Solute carrier family 26 member 6 (SLC26A6) from Homo sapiens (Human).